Here is a 314-residue protein sequence, read N- to C-terminus: Olfactory receptor 5D14 (314 aa).

Over 1 to 27 the chain is Extracellular; that stretch reads MMMVLRNLSMEPTFALLGFTDYPKLQI. Residue Asn-7 is glycosylated (N-linked (GlcNAc...) asparagine). The helical transmembrane segment at 28–48 threads the bilayer; sequence PLFLVFLLMYVITVVGNLGMI. The Cytoplasmic segment spans residues 49–56; sequence IIIKINPK. Residues 57–77 traverse the membrane as a helical segment; sequence FHTPMYFFLSHLSFVDFCYSS. The Extracellular portion of the chain corresponds to 78–101; the sequence is IVTPKLLENLVMADKSIFYFSCMM. Residues 102 to 122 traverse the membrane as a helical segment; the sequence is QYFLSCTAVVTESFLLAVMAY. The Cytoplasmic segment spans residues 123–141; sequence DRFVAICNPLLYTVAMSQR. A helical membrane pass occupies residues 142-162; it reads LCALLVAGSYLWGMFGPLVLL. The Extracellular segment spans residues 163 to 198; the sequence is CYALRLNFSGPNVINHFFCEYTALISVSGSDILIPH. The N-linked (GlcNAc...) asparagine glycan is linked to Asn-169. Residues 199 to 219 form a helical membrane-spanning segment; that stretch reads LLLFSFATFNEMCTLLIILTS. The Cytoplasmic portion of the chain corresponds to 220–239; that stretch reads YVFIFVTVLKIRSVSGRHKA. Residues 240 to 260 form a helical membrane-spanning segment; sequence FSTWASHLTSITIFHGTILFL. The Extracellular portion of the chain corresponds to 261 to 273; the sequence is YCVPNSKNSRQTV. The helical transmembrane segment at 274 to 294 threads the bilayer; sequence KVASVFYTVVNPMLNPLIYSL. The Cytoplasmic portion of the chain corresponds to 295–314; it reads RNKDVKDAFWKLIHTQVPFH.

It belongs to the G-protein coupled receptor 1 family.

The protein localises to the cell membrane. Functionally, odorant receptor. The protein is Olfactory receptor 5D14 (OR5D14) of Homo sapiens (Human).